We begin with the raw amino-acid sequence, 158 residues long: Phosphopantetheine adenylyltransferase (158 aa).

A substrate-binding site is contributed by threonine 10. ATP is bound by residues 10–11 (TF) and histidine 18. Substrate is bound by residues lysine 42, leucine 74, and arginine 88. ATP-binding positions include 89-91 (GLR), glutamate 99, and 124-130 (YSFISSS).

It belongs to the bacterial CoaD family. As to quaternary structure, homohexamer. It depends on Mg(2+) as a cofactor.

It localises to the cytoplasm. It carries out the reaction (R)-4'-phosphopantetheine + ATP + H(+) = 3'-dephospho-CoA + diphosphate. Its pathway is cofactor biosynthesis; coenzyme A biosynthesis; CoA from (R)-pantothenate: step 4/5. In terms of biological role, reversibly transfers an adenylyl group from ATP to 4'-phosphopantetheine, yielding dephospho-CoA (dPCoA) and pyrophosphate. The chain is Phosphopantetheine adenylyltransferase from Erwinia tasmaniensis (strain DSM 17950 / CFBP 7177 / CIP 109463 / NCPPB 4357 / Et1/99).